Here is a 173-residue protein sequence, read N- to C-terminus: Crossover junction endodeoxyribonuclease RuvC (173 aa).

Catalysis depends on residues aspartate 8, glutamate 67, and aspartate 139. Mg(2+) is bound by residues aspartate 8, glutamate 67, and aspartate 139.

The protein belongs to the RuvC family. As to quaternary structure, homodimer which binds Holliday junction (HJ) DNA. The HJ becomes 2-fold symmetrical on binding to RuvC with unstacked arms; it has a different conformation from HJ DNA in complex with RuvA. In the full resolvosome a probable DNA-RuvA(4)-RuvB(12)-RuvC(2) complex forms which resolves the HJ. Requires Mg(2+) as cofactor.

Its subcellular location is the cytoplasm. It catalyses the reaction Endonucleolytic cleavage at a junction such as a reciprocal single-stranded crossover between two homologous DNA duplexes (Holliday junction).. Functionally, the RuvA-RuvB-RuvC complex processes Holliday junction (HJ) DNA during genetic recombination and DNA repair. Endonuclease that resolves HJ intermediates. Cleaves cruciform DNA by making single-stranded nicks across the HJ at symmetrical positions within the homologous arms, yielding a 5'-phosphate and a 3'-hydroxyl group; requires a central core of homology in the junction. The consensus cleavage sequence is 5'-(A/T)TT(C/G)-3'. Cleavage occurs on the 3'-side of the TT dinucleotide at the point of strand exchange. HJ branch migration catalyzed by RuvA-RuvB allows RuvC to scan DNA until it finds its consensus sequence, where it cleaves and resolves the cruciform DNA. The polypeptide is Crossover junction endodeoxyribonuclease RuvC (Shewanella oneidensis (strain ATCC 700550 / JCM 31522 / CIP 106686 / LMG 19005 / NCIMB 14063 / MR-1)).